Consider the following 529-residue polypeptide: Tyrosinase (529 aa).

The first 18 residues, 1-18 (MLLAVLYCLLWSFQTSAG), serve as a signal peptide directing secretion. Residues 19–476 (HFPRACVSSK…YLEQASRIWS (458 aa)) lie on the Lumenal, melanosome side of the membrane. Residues Asn-86, Asn-111, and Asn-161 are each glycosylated (N-linked (GlcNAc...) asparagine). The Cu cation site is built by His-180, His-202, and His-211. N-linked (GlcNAc...) asparagine glycosylation is present at Asn-230. Residues 287–313 (SLCNGTPEGPLRRNPGNHDKSRTPRLP) form a disordered region. Asn-337 carries N-linked (GlcNAc...) asparagine glycosylation. Cu cation is bound by residues His-363 and His-367. Asn-371 carries N-linked (GlcNAc...) asparagine glycosylation. His-390 lines the Cu cation pocket. A helical membrane pass occupies residues 477–497 (WLLGAAMVGAVLTALLAGLVS). The Cytoplasmic portion of the chain corresponds to 498-529 (LLCRHKRKQLPEEKQPLLMEKEDYHSLYQSHL).

Belongs to the tyrosinase family. As to quaternary structure, forms an OPN3-dependent complex with DCT in response to blue light in melanocytes. Cu(2+) is required as a cofactor. Post-translationally, glycosylated.

Its subcellular location is the melanosome membrane. It localises to the melanosome. It catalyses the reaction 2 L-dopa + O2 = 2 L-dopaquinone + 2 H2O. It carries out the reaction L-tyrosine + O2 = L-dopaquinone + H2O. The catalysed reaction is 2 5,6-dihydroxyindole-2-carboxylate + O2 = 2 indole-5,6-quinone-2-carboxylate + 2 H2O. Functionally, this is a copper-containing oxidase that functions in the formation of pigments such as melanins and other polyphenolic compounds. Catalyzes the initial and rate limiting step in the cascade of reactions leading to melanin production from tyrosine. In addition to hydroxylating tyrosine to DOPA (3,4-dihydroxyphenylalanine), also catalyzes the oxidation of DOPA to DOPA-quinone, and possibly the oxidation of DHI (5,6-dihydroxyindole) to indole-5,6 quinone. This is Tyrosinase from Homo sapiens (Human).